A 1329-amino-acid polypeptide reads, in one-letter code: Putative protein tag-53 (1329 aa).

Positions 65-92 (SCDKPCYNGVCLNKACVCSKGWYGSQCD) constitute an EGF-like 1 domain. 5 disulfide bridges follow: Cys66–Cys75, Cys70–Cys80, Cys82–Cys91, Cys94–Cys120, and Cys144–Cys166. The CUB domain maps to 94–203 (CFGRIRISDN…NGFNVSYESN (110 aa)). Asn103 carries N-linked (GlcNAc...) asparagine glycosylation. Residues Asn197 and Asn208 are each glycosylated (N-linked (GlcNAc...) asparagine). EGF-like domains lie at 204–232 (RCAY…LNCE) and 235–270 (VCQL…ETCQ). 6 disulfides stabilise this stretch: Cys205–Cys215, Cys209–Cys220, Cys222–Cys231, Cys236–Cys252, Cys247–Cys257, and Cys259–Cys269. Kelch repeat units lie at residues 302–353 (VVWS…KYKN), 355–408 (LYMF…VAGH), 416–463 (EMFV…AVEY), 471–518 (AILV…YLNG), 520–575 (MVVV…VIGQ), and 577–619 (LYAL…KCVF). Asn324, Asn395, Asn447, Asn481, Asn529, and Asn555 each carry an N-linked (GlcNAc...) asparagine glycan. N-linked (GlcNAc...) asparagine glycosylation is present at Asn820. Residue Asn832 is glycosylated (N-linked (GlcNAc...) asparagine; atypical). 2 N-linked (GlcNAc...) asparagine glycosylation sites follow: Asn833 and Asn934. 8 disulfides stabilise this stretch: Cys945/Cys953, Cys947/Cys968, Cys971/Cys980, Cys983/Cys997, Cys1000/Cys1009, Cys1002/Cys1016, Cys1018/Cys1028, and Cys1031/Cys1045. Laminin EGF-like domains follow at residues 945-999 (CQCN…VCSP) and 1000-1047 (CDCH…PCFY). In terms of domain architecture, EGF-like 4 spans 952–998 (TCFTSVGSFPPVTIEKCQSCQNHTTGAHCERCAPGFYGDARNGGVCS). N-linked (GlcNAc...) asparagine glycosylation occurs at Asn973. N-linked (GlcNAc...) asparagine glycans are attached at residues Asn1066, Asn1102, and Asn1147. A helical transmembrane segment spans residues 1176 to 1196 (VLFFVIFAACFIVLLVVAGLL). The Cytoplasmic portion of the chain corresponds to 1197–1329 (WMIKVRIEAY…TIRQRPNNND (133 aa)).

The protein resides in the membrane. The protein is Putative protein tag-53 (tag-53) of Caenorhabditis elegans.